The following is a 189-amino-acid chain: ATP-dependent protease subunit HslV (189 aa).

Threonine 12 is an active-site residue. The Na(+) site is built by alanine 172, cysteine 175, and threonine 178.

This sequence belongs to the peptidase T1B family. HslV subfamily. In terms of assembly, a double ring-shaped homohexamer of HslV is capped on each side by a ring-shaped HslU homohexamer. The assembly of the HslU/HslV complex is dependent on binding of ATP.

Its subcellular location is the cytoplasm. It carries out the reaction ATP-dependent cleavage of peptide bonds with broad specificity.. With respect to regulation, allosterically activated by HslU binding. In terms of biological role, protease subunit of a proteasome-like degradation complex believed to be a general protein degrading machinery. The protein is ATP-dependent protease subunit HslV of Anaplasma phagocytophilum (strain HZ).